Reading from the N-terminus, the 274-residue chain is 2,3,4,5-tetrahydropyridine-2,6-dicarboxylate N-succinyltransferase (274 aa).

Belongs to the transferase hexapeptide repeat family.

Its subcellular location is the cytoplasm. It carries out the reaction (S)-2,3,4,5-tetrahydrodipicolinate + succinyl-CoA + H2O = (S)-2-succinylamino-6-oxoheptanedioate + CoA. Its pathway is amino-acid biosynthesis; L-lysine biosynthesis via DAP pathway; LL-2,6-diaminopimelate from (S)-tetrahydrodipicolinate (succinylase route): step 1/3. The chain is 2,3,4,5-tetrahydropyridine-2,6-dicarboxylate N-succinyltransferase from Erwinia tasmaniensis (strain DSM 17950 / CFBP 7177 / CIP 109463 / NCPPB 4357 / Et1/99).